The sequence spans 406 residues: Aspartokinase (406 aa).

The 65-residue stretch at 342 to 406 (IIGHGIKNDL…LLKISETGHC (65 aa)) folds into the ACT domain.

The protein belongs to the aspartokinase family.

It catalyses the reaction L-aspartate + ATP = 4-phospho-L-aspartate + ADP. The protein operates within amino-acid biosynthesis; L-lysine biosynthesis via DAP pathway; (S)-tetrahydrodipicolinate from L-aspartate: step 1/4. Its pathway is amino-acid biosynthesis; L-methionine biosynthesis via de novo pathway; L-homoserine from L-aspartate: step 1/3. It functions in the pathway amino-acid biosynthesis; L-threonine biosynthesis; L-threonine from L-aspartate: step 1/5. This is Aspartokinase (lysC) from Rickettsia bellii (strain RML369-C).